A 376-amino-acid polypeptide reads, in one-letter code: Putative glutamate--cysteine ligase 2 (376 aa).

This sequence belongs to the glutamate--cysteine ligase type 2 family. YbdK subfamily.

The catalysed reaction is L-cysteine + L-glutamate + ATP = gamma-L-glutamyl-L-cysteine + ADP + phosphate + H(+). Its function is as follows. ATP-dependent carboxylate-amine ligase which exhibits weak glutamate--cysteine ligase activity. The chain is Putative glutamate--cysteine ligase 2 from Mycolicibacterium paratuberculosis (strain ATCC BAA-968 / K-10) (Mycobacterium paratuberculosis).